Reading from the N-terminus, the 1165-residue chain is Adhesion G-protein coupled receptor G6 (1165 aa).

Positions 1–30 (MMFDTLGKRCCPWRLKPSALLFLFVLCVTC) are cleaved as a signal peptide. Over 31–832 (VPLSVCGCGS…ASQIDGRNTK (802 aa)) the chain is Extracellular. The cysteines at positions 41 and 67 are disulfide-linked. The region spanning 41–149 (CRLVLSNPSG…KGFNASYIRV (109 aa)) is the CUB domain. Residues E89 and D97 each contribute to the Ca(2+) site. C94 and C111 are disulfide-bonded. N-linked (GlcNAc...) asparagine glycosylation is present at N121. The Ca(2+) site is built by D134, S136, and I137. N-linked (GlcNAc...) asparagine glycosylation occurs at N143. The Pentraxin (PTX) domain maps to 154-356 (RNQKVILPQT…ALKAEGNLSC (203 aa)). 2 cysteine pairs are disulfide-bonded: C186-C254 and C231-C277. N-linked (GlcNAc...) asparagine glycosylation is found at N258, N314, N324, N353, N370, N410, N417, N424, N458, N462, and N478. Residues 446-807 (DKRLVLWALL…LDAGETICLC (362 aa)) are mediates interaction with laminin-2. 2 disulfides stabilise this stretch: C498–C533 and C521–C550. Residues N536, N549, N563, N570, N665, N674, N720, N746, N781, and N788 are each glycosylated (N-linked (GlcNAc...) asparagine). The 184-residue stretch at 640-823 (PHVNIETQNL…GVLMDLPRSA (184 aa)) folds into the GAIN-B domain. Intrachain disulfides connect C773–C805 and C792–C807. The interval 773 to 823 (CAFWDMNKNKSFGGWNTSGCVAHSDLDAGETICLCSHFTHFGVLMDLPRSA) is GPS. The stachel stretch occupies residues 812–820 (HFGVLMDLP). The chain crosses the membrane as a helical span at residues 833-853 (VLTFITYIGCGISAIFSAATL). Over 854–873 (LTYVAFEKLRRDYPSKILMN) the chain is Cytoplasmic. Residues 874-894 (LSSALLFLNLIFLLDGWVTSF) form a helical membrane-spanning segment. Residues 895–899 (GVAGL) lie on the Extracellular side of the membrane. Residues 900 to 920 (CTAVAALLHFFLLATFTWMGL) traverse the membrane as a helical segment. Topologically, residues 921-940 (EAIHMYIALVKVFNTYIHRY) are cytoplasmic. The helical transmembrane segment at 941–961 (ILKFCIIGWGLPALVVSIILV) threads the bilayer. The Extracellular segment spans residues 962–994 (SRRQNEVYGKESYGKDQDDEFCWIQDPVVFYVS). The chain crosses the membrane as a helical span at residues 995-1015 (CAGYFGVMFFLNVAMFIVVMV). The Cytoplasmic portion of the chain corresponds to 1016-1039 (QICGRNGKRSNRTLREEVLRNLRS). Residues 1040–1060 (VVSLTFLLGMTWGFAFFAWGP) traverse the membrane as a helical segment. The Extracellular portion of the chain corresponds to 1061 to 1062 (LN). The chain crosses the membrane as a helical span at residues 1063–1083 (IPFMYLFSIFNSLQGLFIFIF). A 17alpha-hydroxyprogesterone-binding site is contributed by N1073. Residues 1084-1165 (HCAMKENVQK…KRNSHSDNFS (82 aa)) are Cytoplasmic-facing. Residues 1126-1154 (NLGKSLSSSSIGSNSTYLTSKSKSSSTTY) are compositionally biased toward low complexity. Residues 1126-1165 (NLGKSLSSSSIGSNSTYLTSKSKSSSTTYFKRNSHSDNFS) are disordered. 2 positions are modified to phosphoserine: S1135 and S1138.

This sequence belongs to the G-protein coupled receptor 2 family. Adhesion G-protein coupled receptor (ADGR) subfamily. As to quaternary structure, heterodimer of 2 chains generated by proteolytic processing; the large extracellular N-terminal fragment and the membrane-bound C-terminal fragment predominantly remain associated and non-covalently linked. Interacts with Laminin-2; this interaction stabilizes the receptor in an inactive state. Laminin-2 polymerization could facilitate ADGRG6-NTF removal, thereby exposing the tethered agonist to drive myelination. Interacts with PRNP. Interacts with ITGB1. Interacts with LRP1. In terms of processing, proteolytically cleaved into 2 conserved sites: one in the GPS region of the GAIN-B domain (S1 site) and the other in the middle of the extracellular domain (S2 site). The proteolytic cleavage at S1 site generates an extracellular subunit and a seven-transmembrane subunit. Furin is involved in the cleavage of the S2 site generating a soluble fragment. Processing at the GPS region occurred independent of and probably prior to the cleavage at the S2 site. Proteolytic cleavage is required for activation of the receptor. Expressed at high levels in the heart, somite and otic vesicle during embryogenesis and in adult lung.

The protein resides in the cell membrane. Forms a heterodimer of 2 chains generated by proteolytic processing that remain associated through non-covalent interactions mediated by the GAIN-B domain. In the inactivated receptor, the Stachel sequence (also named stalk) is embedded in the GAIN-B domain, where it adopts a beta-strand conformation. On activation, the Stachel moves into the 7 transmembrane region and adopts a twisted hook-shaped configuration that forms contacts within the receptor, leading to coupling of a G-alpha protein, which activates signaling. The cleaved GAIN-B and N-terminal domains can then dissociate from the rest of the receptor. Adhesion G-protein coupled receptor (aGPCR) for steroid hormones, such as progesterone and 17alpha-hydroxyprogesterone (17OHP). Involved in many biological processes, such as myelination, sprouting angiogenesis, placenta, ear and cartilage development. Ligand binding causes a conformation change that triggers signaling via guanine nucleotide-binding proteins (G proteins) and modulates the activity of downstream effectors, such as adenylate cyclase. ADGRG6 is coupled to G(i) G alpha proteins and mediates inhibition of adenylate cyclase. Also able to couple to G(q) G proteins. Involved in myelination of the peripheral nervous system: required for differentiation of promyelinating Schwann cells and for normal myelination of axons. Also acts as a regulator of body length and bone mass. Acts as a regulator of blood-brain barrier formation in the central nervous system vie its association with LRP1 and ITGB1. This is Adhesion G-protein coupled receptor G6 from Mus musculus (Mouse).